The primary structure comprises 251 residues: tRNA-cytidine(32) 2-sulfurtransferase 2 (251 aa).

The PP-loop motif signature appears at 33–38; the sequence is SGGKDS. Residues Cys-108, Cys-111, and Cys-199 each coordinate [4Fe-4S] cluster.

Belongs to the TtcA family. As to quaternary structure, homodimer. It depends on Mg(2+) as a cofactor. Requires [4Fe-4S] cluster as cofactor.

It is found in the cytoplasm. It catalyses the reaction cytidine(32) in tRNA + S-sulfanyl-L-cysteinyl-[cysteine desulfurase] + AH2 + ATP = 2-thiocytidine(32) in tRNA + L-cysteinyl-[cysteine desulfurase] + A + AMP + diphosphate + H(+). It functions in the pathway tRNA modification. In terms of biological role, catalyzes the ATP-dependent 2-thiolation of cytidine in position 32 of tRNA, to form 2-thiocytidine (s(2)C32). The sulfur atoms are provided by the cysteine/cysteine desulfurase (IscS) system. This chain is tRNA-cytidine(32) 2-sulfurtransferase 2, found in Francisella tularensis subsp. tularensis (strain WY96-3418).